A 415-amino-acid chain; its full sequence is Alpha-1,3/1,6-mannosyltransferase ALG2 (415 aa).

Residues 1–84 (MAENLYRARS…LPRSLGWGGR (84 aa)) are Cytoplasmic-facing. The segment at residues 85–105 (GAAICSYVRMVFLALYVLFLS) is an intramembrane region (helical). Residues 106-415 (GEEFDVVVCD…QLYQYVTKLV (310 aa)) lie on the Cytoplasmic side of the membrane.

The protein belongs to the glycosyltransferase group 1 family. Glycosyltransferase 4 subfamily.

The protein localises to the endoplasmic reticulum membrane. The catalysed reaction is a beta-D-Man-(1-&gt;4)-beta-D-GlcNAc-(1-&gt;4)-alpha-D-GlcNAc-diphospho-di-trans,poly-cis-dolichol + GDP-alpha-D-mannose = an alpha-D-Man-(1-&gt;3)-beta-D-Man-(1-&gt;4)-beta-D-GlcNAc-(1-&gt;4)-alpha-D-GlcNAc-diphospho-di-trans,poly-cis-dolichol + GDP + H(+). It carries out the reaction an alpha-D-Man-(1-&gt;3)-beta-D-Man-(1-&gt;4)-beta-D-GlcNAc-(1-&gt;4)-alpha-D-GlcNAc-diphospho-di-trans,poly-cis-dolichol + GDP-alpha-D-mannose = an alpha-D-Man-(1-&gt;3)-[alpha-D-Man-(1-&gt;6)]-beta-D-Man-(1-&gt;4)-beta-D-GlcNAc-(1-&gt;4)-alpha-D-GlcNAc-diphospho-di-trans,poly-cis-dolichol + GDP + H(+). The enzyme catalyses a beta-D-Man-(1-&gt;4)-beta-D-GlcNAc-(1-&gt;4)-alpha-D-GlcNAc-diphospho-di-trans,poly-cis-dolichol + GDP-alpha-D-mannose = an alpha-D-Man-(1-&gt;6)-beta-D-Man-(1-&gt;4)-beta-D-GlcNAc-(1-&gt;4)-alpha-D-GlcNAc-diphospho-di-trans,poly-cis-dolichol + GDP + H(+). It catalyses the reaction an alpha-D-Man-(1-&gt;6)-beta-D-Man-(1-&gt;4)-beta-D-GlcNAc-(1-&gt;4)-alpha-D-GlcNAc-diphospho-di-trans,poly-cis-dolichol + GDP-alpha-D-mannose = an alpha-D-Man-(1-&gt;3)-[alpha-D-Man-(1-&gt;6)]-beta-D-Man-(1-&gt;4)-beta-D-GlcNAc-(1-&gt;4)-alpha-D-GlcNAc-diphospho-di-trans,poly-cis-dolichol + GDP + H(+). It functions in the pathway protein modification; protein glycosylation. Functionally, mannosyltransferase that operates in the biosynthetic pathway of dolichol-linked oligosaccharides, the glycan precursors employed in protein asparagine (N)-glycosylation. The assembly of dolichol-linked oligosaccharides begins on the cytosolic side of the endoplasmic reticulum membrane and finishes in its lumen. The sequential addition of sugars to dolichol pyrophosphate produces dolichol-linked oligosaccharides containing fourteen sugars, including two GlcNAcs, nine mannoses and three glucoses. Once assembled, the oligosaccharide is transferred from the lipid to nascent proteins by oligosaccharyltransferases. Catalyzes, on the cytoplasmic face of the endoplasmic reticulum, the addition of the second and third mannose residues to the dolichol-linked oligosaccharide chain, to produce Man3GlcNAc(2)-PP-dolichol core oligosaccharide. Man3GlcNAc(2)-PP-dolichol is a substrate for ALG11, the following enzyme in the biosynthetic pathway. While both alpha 1,3 and alpha 1,6 linkages are possible, the sequential addition of alpha 1,3 followed by alpha 1,6 is probably the preferred route. The sequence is that of Alpha-1,3/1,6-mannosyltransferase ALG2 (Alg2) from Mus musculus (Mouse).